The primary structure comprises 309 residues: Homoserine kinase (309 aa).

ATP is bound at residue 91–101 (PIGSGLGSSAC).

Belongs to the GHMP kinase family. Homoserine kinase subfamily.

Its subcellular location is the cytoplasm. It carries out the reaction L-homoserine + ATP = O-phospho-L-homoserine + ADP + H(+). It functions in the pathway amino-acid biosynthesis; L-threonine biosynthesis; L-threonine from L-aspartate: step 4/5. Its function is as follows. Catalyzes the ATP-dependent phosphorylation of L-homoserine to L-homoserine phosphate. This chain is Homoserine kinase, found in Klebsiella pneumoniae (strain 342).